The primary structure comprises 234 residues: Thymidine kinase, cytosolic (234 aa).

The residue at position 2 (serine 2) is an N-acetylserine. A phosphoserine mark is found at serine 2 and serine 13. ATP is bound by residues glycine 26–serine 33, aspartate 58–arginine 60, and aspartate 97–glutamine 100. The active-site Proton acceptor is glutamate 98. Substrate is bound at residue phenylalanine 128. Zn(2+)-binding residues include cysteine 153 and cysteine 156. Substrate is bound by residues valine 172–glycine 176 and tyrosine 181. Positions 185 and 188 each coordinate Zn(2+). Positions lysine 203–asparagine 205 match the KEN box motif. Serine 231 is subject to Phosphoserine.

This sequence belongs to the thymidine kinase family. In terms of assembly, homotetramer. Tetramerization from dimerization is induced by ATP and increases catalytic efficiency due to a high affinity for thymidine. Tetramerization is inhibited by phosphorylation at Ser-13. Interacts (via the KEN box) with FZR1. Post-translationally, phosphorylated on Ser-13 in mitosis. Phosphorylation of Ser-13 by CDK1 during mitosis reduces homotetramerization and catalytic efficiency when DNA replication is complete and intracellular TK1 is still present at a high level. In terms of processing, polyubiquitinated. Postmitosis, ubiquitination leads to proteasomal degradation. The KEN box sequence located at the C-terminal region targets for degradation by the anaphase promoting complex (APC/C) activated and rate-limited by FZR1.

The protein localises to the cytoplasm. It carries out the reaction thymidine + ATP = dTMP + ADP + H(+). Cell-cycle-regulated enzyme of importance in nucleotide metabolism. Catalyzes the first enzymatic step in the salvage pathway converting thymidine into thymidine monophosphate. Transcriptional regulation limits expression to the S phase of the cell cycle and transient expression coincides with the oscillation in the intracellular dTTP concentration. Also important for the activation of anticancer and antiviral nucleoside analog prodrugs such as 1-b-d-arabinofuranosylcytosine (AraC) and 3c-azido-3c-deoxythymidine (AZT). In Homo sapiens (Human), this protein is Thymidine kinase, cytosolic.